Reading from the N-terminus, the 296-residue chain is NAD kinase (296 aa).

Catalysis depends on D73, which acts as the Proton acceptor. Residues 73-74 (DG), K78, 151-152 (NE), R178, D180, and 191-196 (TAHAMS) contribute to the NAD(+) site.

Belongs to the NAD kinase family. A divalent metal cation is required as a cofactor.

It is found in the cytoplasm. The catalysed reaction is NAD(+) + ATP = ADP + NADP(+) + H(+). Involved in the regulation of the intracellular balance of NAD and NADP, and is a key enzyme in the biosynthesis of NADP. Catalyzes specifically the phosphorylation on 2'-hydroxyl of the adenosine moiety of NAD to yield NADP. This chain is NAD kinase, found in Francisella tularensis subsp. tularensis (strain FSC 198).